Consider the following 66-residue polypeptide: Beta-toxin Cb3 (66 aa).

In terms of domain architecture, LCN-type CS-alpha/beta spans K1–L66. Disulfide bonds link C12-C65, C16-C41, C25-C46, and C29-C48.

Belongs to the long (4 C-C) scorpion toxin superfamily. Sodium channel inhibitor family. Beta subfamily. In terms of tissue distribution, expressed by the venom gland.

It is found in the secreted. In terms of biological role, beta toxins bind voltage-independently at site-4 of sodium channels (Nav) and reduces peak current and shifts the voltage of activation toward more negative potentials thereby affecting sodium channel activation and promoting spontaneous and repetitive firing. Has an inhibitory effect on voltage-gated sodium channels hNav1.1/SCN1A, hNav1.2/SCN2A, hNav1.4/SCN4A and hNav1.6/SCN8A. Reduces the peak current of hNav1.5/SCN5A but does not shift its voltage of activation. Also affects the inactivation processes of hNav1.1/SCN1A, hNav1.4/SCN4A, hNav1.5/SCN5A and hNav1.6/SCN8A. This toxin is active against mammals and lethal to mice. This is Beta-toxin Cb3 from Centruroides baergi (Scorpion).